A 623-amino-acid polypeptide reads, in one-letter code: Glutathione import ATP-binding protein GsiA (623 aa).

ABC transporter domains follow at residues V18–L272 and L317–M567. Residues G52–S59 and G360–S367 each bind ATP.

Belongs to the ABC transporter superfamily. Glutathione importer (TC 3.A.1.5.11) family. The complex is composed of two ATP-binding proteins (GsiA), two transmembrane proteins (GsiC and GsiD) and a solute-binding protein (GsiB).

The protein resides in the cell inner membrane. It catalyses the reaction glutathione(out) + ATP + H2O = glutathione(in) + ADP + phosphate + H(+). Functionally, part of the ABC transporter complex GsiABCD involved in glutathione import. Responsible for energy coupling to the transport system. This chain is Glutathione import ATP-binding protein GsiA, found in Pectobacterium atrosepticum (strain SCRI 1043 / ATCC BAA-672) (Erwinia carotovora subsp. atroseptica).